The following is a 154-amino-acid chain: MGLSDAEWQLVLNVWGKVEADIPGHGQDVLIRLFKGHPETLEKFDRFKHLKTEDEMKASEDLKKHGTTVLTALGGILKKKGQHEAEIQPLAQSHATKHKIPVKYLEFISEAIIQVIQSKHSGDFGADAQGAMSKALELFRNDIAAKYKELGFQG.

The Globin domain occupies 2-148 (GLSDAEWQLV…FRNDIAAKYK (147 aa)). At S4 the chain carries Phosphoserine. H65 is a binding site for nitrite. H65 serves as a coordination point for O2. A Phosphothreonine modification is found at T68. H94 serves as a coordination point for heme b.

Belongs to the globin family. Monomeric.

The protein localises to the cytoplasm. It is found in the sarcoplasm. The enzyme catalyses Fe(III)-heme b-[protein] + nitric oxide + H2O = Fe(II)-heme b-[protein] + nitrite + 2 H(+). It catalyses the reaction H2O2 + AH2 = A + 2 H2O. Its function is as follows. Monomeric heme protein which primary function is to store oxygen and facilitate its diffusion within muscle tissues. Reversibly binds oxygen through a pentacoordinated heme iron and enables its timely and efficient release as needed during periods of heightened demand. Depending on the oxidative conditions of tissues and cells, and in addition to its ability to bind oxygen, it also has a nitrite reductase activity whereby it regulates the production of bioactive nitric oxide. Under stress conditions, like hypoxia and anoxia, it also protects cells against reactive oxygen species thanks to its pseudoperoxidase activity. This chain is Myoglobin (MB), found in Orycteropus afer (Aardvark).